Consider the following 286-residue polypeptide: Probable transport system permease protein NifC (286 aa).

6 helical membrane passes run 34–54 (LFLA…ISMI), 75–95 (IILS…IGTP), 114–134 (IFVE…LLLA), 152–172 (VIFT…ALYV), 216–236 (GLIL…MFAG), and 257–277 (IKMA…LLLL). The region spanning 75-278 (IILSFVTSLI…IMTFVLLLLV (204 aa)) is the ABC transmembrane type-1 domain.

This sequence belongs to the binding-protein-dependent transport system permease family. CysTW subfamily.

It localises to the cell membrane. Functionally, may be involved in molybdenum transport. This Clostridium pasteurianum protein is Probable transport system permease protein NifC (nifC).